The primary structure comprises 118 residues: Acidic phospholipase A2 (118 aa).

Positions 25, 27, and 29 each coordinate Ca(2+). The active site involves H45. D46 contributes to the Ca(2+) binding site. Residue D86 is part of the active site.

It belongs to the phospholipase A2 family. Group II subfamily. D49 sub-subfamily. It depends on Ca(2+) as a cofactor. Post-translationally, six disulfide bonds are present. Expressed by the venom gland.

It is found in the secreted. The catalysed reaction is a 1,2-diacyl-sn-glycero-3-phosphocholine + H2O = a 1-acyl-sn-glycero-3-phosphocholine + a fatty acid + H(+). Its function is as follows. PLA2 catalyzes the calcium-dependent hydrolysis of the 2-acyl groups in 3-sn-phosphoglycerides. This Bitis gabonica (Gaboon adder) protein is Acidic phospholipase A2.